Consider the following 146-residue polypeptide: Prefoldin subunit alpha (146 aa).

The protein belongs to the prefoldin alpha subunit family. As to quaternary structure, heterohexamer of two alpha and four beta subunits.

It is found in the cytoplasm. Functionally, molecular chaperone capable of stabilizing a range of proteins. Seems to fulfill an ATP-independent, HSP70-like function in archaeal de novo protein folding. The sequence is that of Prefoldin subunit alpha from Methanobrevibacter smithii (strain ATCC 35061 / DSM 861 / OCM 144 / PS).